A 466-amino-acid chain; its full sequence is ATP synthase subunit beta (466 aa).

153–160 is an ATP binding site; it reads GGAGVGKT.

It belongs to the ATPase alpha/beta chains family. F-type ATPases have 2 components, CF(1) - the catalytic core - and CF(0) - the membrane proton channel. CF(1) has five subunits: alpha(3), beta(3), gamma(1), delta(1), epsilon(1). CF(0) has three main subunits: a(1), b(2) and c(9-12). The alpha and beta chains form an alternating ring which encloses part of the gamma chain. CF(1) is attached to CF(0) by a central stalk formed by the gamma and epsilon chains, while a peripheral stalk is formed by the delta and b chains.

It is found in the cell membrane. It carries out the reaction ATP + H2O + 4 H(+)(in) = ADP + phosphate + 5 H(+)(out). Its function is as follows. Produces ATP from ADP in the presence of a proton gradient across the membrane. The catalytic sites are hosted primarily by the beta subunits. This is ATP synthase subunit beta from Leuconostoc mesenteroides subsp. mesenteroides (strain ATCC 8293 / DSM 20343 / BCRC 11652 / CCM 1803 / JCM 6124 / NCDO 523 / NBRC 100496 / NCIMB 8023 / NCTC 12954 / NRRL B-1118 / 37Y).